The chain runs to 258 residues: UPF0246 protein CGSHiGG_08495 (258 aa).

It belongs to the UPF0246 family.

This Haemophilus influenzae (strain PittGG) protein is UPF0246 protein CGSHiGG_08495.